A 520-amino-acid chain; its full sequence is ATP synthase subunit alpha (520 aa).

An ATP-binding site is contributed by 169–176 (GDRKTGKT).

This sequence belongs to the ATPase alpha/beta chains family. F-type ATPases have 2 components, CF(1) - the catalytic core - and CF(0) - the membrane proton channel. CF(1) has five subunits: alpha(3), beta(3), gamma(1), delta(1), epsilon(1). CF(0) has three main subunits: a(1), b(2) and c(9-12). The alpha and beta chains form an alternating ring which encloses part of the gamma chain. CF(1) is attached to CF(0) by a central stalk formed by the gamma and epsilon chains, while a peripheral stalk is formed by the delta and b chains.

Its subcellular location is the cell membrane. It catalyses the reaction ATP + H2O + 4 H(+)(in) = ADP + phosphate + 5 H(+)(out). In terms of biological role, produces ATP from ADP in the presence of a proton gradient across the membrane. The alpha chain is a regulatory subunit. This chain is ATP synthase subunit alpha, found in Oenococcus oeni (strain ATCC BAA-331 / PSU-1).